The primary structure comprises 267 residues: Centromere protein Q (267 aa).

Basic residues-rich tracts occupy residues 1-22 (MSGKARASRKKPQQVKRSLKQR) and 39-49 (KRNRSHAKHLS). The segment at 1-54 (MSGKARASRKKPQQVKRSLKQRANKEADLPENEVGNTAKRNRSHAKHLSSKVTG) is disordered. Ser-49 carries the phosphoserine modification. A coiled-coil region spans residues 100–202 (IKRKEEIQCH…EEQEVKQVFH (103 aa)).

This sequence belongs to the CENP-Q/OKP1 family. Component of the CENPA-CAD complex, composed of CENPI, CENPK, CENPL, CENPO, CENPP, CENPQ, CENPR and CENPS. The CENPA-CAD complex interacts with the CENPA-NAC complex, at least composed of CENPA, CENPC, CENPH, CENPM, CENPN, CENPT and CENPU. Post-translationally, phosphorylation at Ser-49 is essential for CENPE recruitment to kinetochores and orderly chromosome congression.

It is found in the nucleus. It localises to the chromosome. Its subcellular location is the centromere. Its function is as follows. Component of the CENPA-CAD (nucleosome distal) complex, a complex recruited to centromeres which is involved in assembly of kinetochore proteins, mitotic progression and chromosome segregation. May be involved in incorporation of newly synthesized CENPA into centromeres via its interaction with the CENPA-NAC complex. Plays an important role in chromosome congression and in the recruitment of CENP-O complex (which comprises CENPO, CENPP, CENPQ and CENPU), CENPE and PLK1 to the kinetochores. This is Centromere protein Q (Cenpq) from Mus musculus (Mouse).